The sequence spans 370 residues: MAPKLQAQFDAVKVLNETQSKFEMVQILDEDGNVVNEDLVPDLTDEQLVELMERMVWTRILDQRSISLNRQGRLGFYAPTAGQEASQLASQYALESEDFILPGYRDVPQIIWHGLPLTDAFLFSRGHFKGNQFPEGVNALSPQIIIGAQYIQTAGVAFGLKKRGKNAVAITYTGDGGSSQGDFYEGINFASAYKAPAIFVIQNNNYAISTPRSKQTAAETLAQKAISVGIPGIQVDGMDALAVYQATLEARERAVAGEGPTVIETLTYRYGPHTMAGDDPTRYRTSDEDAEWEKKDPLVRFRKYLEAKGLWNEDKENEVVERAKSEIKAAIKEADNTEKQTVTSLMDIMYEEMPQNLAEQYEIYKEKESK.

Heterodimer of an alpha and a beta chain. It depends on thiamine diphosphate as a cofactor.

The enzyme catalyses N(6)-[(R)-lipoyl]-L-lysyl-[protein] + pyruvate + H(+) = N(6)-[(R)-S(8)-acetyldihydrolipoyl]-L-lysyl-[protein] + CO2. The pyruvate dehydrogenase complex catalyzes the overall conversion of pyruvate to acetyl-CoA and CO(2). It contains multiple copies of three enzymatic components: pyruvate dehydrogenase (E1), dihydrolipoamide acetyltransferase (E2) and lipoamide dehydrogenase (E3). This chain is Pyruvate dehydrogenase E1 component subunit alpha (pdhA), found in Staphylococcus epidermidis (strain ATCC 35984 / DSM 28319 / BCRC 17069 / CCUG 31568 / BM 3577 / RP62A).